A 151-amino-acid chain; its full sequence is MSIPFSNTHYRIPQGFGNLLEGLTREILREQPDNIPAFAAAYFESLLEKREKTNFDPAEWGSKVEDRFYNNHAFEEQEPPEKSDPKQEESQIPGKEEEASVTILDSSEEDKEKEEVAAVKIQAAFRGHVAREEVKKMKTDSLQNEEKEENK.

A compositionally biased stretch (basic and acidic residues) spans F68–E98. Disordered regions lie at residues F68–E115 and A130–K151. Residues E114 to Q143 enclose the IQ domain.

In terms of assembly, homodimer. May interact with ROPN1. Testis- and sperm-specific.

The protein resides in the membrane. In terms of biological role, sperm surface zona pellucida binding protein. Helps to bind spermatozoa to the zona pellucida with high affinity. Might function in binding zona pellucida and carbohydrates. This chain is Sperm surface protein Sp17 (SPA17), found in Macaca fascicularis (Crab-eating macaque).